The primary structure comprises 968 residues: RNA polymerase-associated protein RapA (968 aa).

A Helicase ATP-binding domain is found at 164-334; sequence DVGRRHAPRV…FARLRLLDPN (171 aa). 177 to 184 contributes to the ATP binding site; the sequence is DEVGLGKT. Positions 280–283 match the DEAH box motif; the sequence is DEAH. Residues 490–662 form the Helicase C-terminal domain; that stretch reads RVEWLMGYLT…YLASPDQTEG (173 aa).

The protein belongs to the SNF2/RAD54 helicase family. RapA subfamily. In terms of assembly, interacts with the RNAP. Has a higher affinity for the core RNAP than for the holoenzyme. Its ATPase activity is stimulated by binding to RNAP.

In terms of biological role, transcription regulator that activates transcription by stimulating RNA polymerase (RNAP) recycling in case of stress conditions such as supercoiled DNA or high salt concentrations. Probably acts by releasing the RNAP, when it is trapped or immobilized on tightly supercoiled DNA. Does not activate transcription on linear DNA. Probably not involved in DNA repair. The sequence is that of RNA polymerase-associated protein RapA from Escherichia coli (strain 55989 / EAEC).